A 163-amino-acid polypeptide reads, in one-letter code: Transcriptional repressor NrdR (163 aa).

The segment at 3–34 is a zinc-finger region; that stretch reads CPSCNSESSRVVDSRSIEMGVSIRRRRECSEC. Positions 46 to 136 constitute an ATP-cone domain; the sequence is LLVVKRNGVT…VYKSFNCAED (91 aa).

Belongs to the NrdR family. Requires Zn(2+) as cofactor.

In terms of biological role, negatively regulates transcription of bacterial ribonucleotide reductase nrd genes and operons by binding to NrdR-boxes. The protein is Transcriptional repressor NrdR of Corynebacterium jeikeium (strain K411).